The following is a 644-amino-acid chain: Phosphomethylpyrimidine synthase (644 aa).

Residues asparagine 236, methionine 265, tyrosine 294, histidine 330, serine 350–glycine 352, aspartate 391–arginine 394, and glutamate 430 each bind substrate. Zn(2+) is bound at residue histidine 434. Position 457 (tyrosine 457) interacts with substrate. Residue histidine 498 coordinates Zn(2+). Positions 578, 581, and 586 each coordinate [4Fe-4S] cluster. The disordered stretch occupies residues arginine 623–glutamate 644.

This sequence belongs to the ThiC family. In terms of assembly, homodimer. Requires [4Fe-4S] cluster as cofactor.

It catalyses the reaction 5-amino-1-(5-phospho-beta-D-ribosyl)imidazole + S-adenosyl-L-methionine = 4-amino-2-methyl-5-(phosphooxymethyl)pyrimidine + CO + 5'-deoxyadenosine + formate + L-methionine + 3 H(+). The protein operates within cofactor biosynthesis; thiamine diphosphate biosynthesis. In terms of biological role, catalyzes the synthesis of the hydroxymethylpyrimidine phosphate (HMP-P) moiety of thiamine from aminoimidazole ribotide (AIR) in a radical S-adenosyl-L-methionine (SAM)-dependent reaction. The protein is Phosphomethylpyrimidine synthase of Aliivibrio fischeri (strain MJ11) (Vibrio fischeri).